The sequence spans 441 residues: RNA-binding protein BRN1 (441 aa).

2 RRM domains span residues 18-99 and 106-186; these read VKLF…YADG and HKLF…WADT. The segment covering 258-273 has biased composition (polar residues); it reads QPNQGNNNALQGTSPD. A disordered region spans residues 258-282; sequence QPNQGNNNALQGTSPDSVPPRLARR. An RRM 3 domain is found at 349-427; the sequence is ANLFIYNIPR…KKLKVQLKRD (79 aa).

Highly expressed in stems and cauline leaves, and at lower levels in siliques, flowers, roots and rosette leaves.

The protein localises to the cytoplasm. RNA-binding protein involved in the regulation of flowering time. Acts as a repressor of the activity of SOC1, a transcriptional activator of flowering time. Binds to the 3'-UTR of SOC1 mRNA in the cytoplasm and participates in SOC1 mRNA decay, mediated by the distal region of the SOC1 3'-UTR. Acts as a positive regulator of salicylic acid (SA)-mediated immunity. May act on SA signaling-related genes at a post-transcriptional level. The protein is RNA-binding protein BRN1 of Arabidopsis thaliana (Mouse-ear cress).